The sequence spans 315 residues: Three-prime repair exonuclease 1 (315 aa).

Positions 18 and 20 each coordinate Mg(2+). Substrate is bound at residue 20-21; it reads EA. Serine 78 carries the post-translational modification Phosphoserine. Tyrosine 129 contributes to the substrate binding site. Serine 167 is subject to Phosphoserine. Histidine 195 serves as the catalytic Proton donor/acceptor. Aspartate 200 is a binding site for Mg(2+). Aspartate 200 lines the substrate pocket. The tract at residues 236–315 is necessary for endoplasmic reticulum localization; sequence TTSTGTNPRP…YGLSLAMPGQ (80 aa). The interval 243–315 is interaction with UBQLN1; sequence PRPSAVTATV…YGLSLAMPGQ (73 aa). Residues 256–282 form a disordered region; sequence RASDTGPNLRGDRSPKPAPSPKMCPGA. Pro residues predominate over residues 271–282; it reads KPAPSPKMCPGA. The tract at residues 282–315 is necessary for cytoplasmic retention; it reads APPGEGLLAPLGLLAFLTLAVAMLYGLSLAMPGQ.

This sequence belongs to the exonuclease superfamily. TREX family. As to quaternary structure, homodimer. Interacts (via proline-rich region) with TCERG1/CA150 (via the second WW domain). Component of the SET complex, composed of at least ANP32A, APEX1, HMGB2, NME1, SET and TREX1. Within this complex, directly interacts with SET; this interaction does not result in TREX1 inhibition. Also interacts with NME1, but only following translocation to the nucleus. Directly interacts with UBQLN1 (via ubiquitin-like domain); the interaction may control TREX1 subcellular location. Mg(2+) is required as a cofactor. Ubiquitinated, but not targeted to proteasomal degradation. Ubiquitination may be important for interaction with UBQLN1.

It is found in the nucleus. It localises to the cytoplasm. The protein localises to the cytosol. Its subcellular location is the endoplasmic reticulum membrane. The enzyme catalyses Exonucleolytic cleavage in the 3'- to 5'-direction to yield nucleoside 5'-phosphates.. Major cellular 3'-to-5' DNA exonuclease which digests single-stranded DNA (ssDNA) and double-stranded DNA (dsDNA) with mismatched 3' termini. Prevents cell-intrinsic initiation of autoimmunity. Acts by metabolizing DNA fragments from endogenous retroelements, including L1, LTR and SINE elements. Plays a key role in degradation of DNA fragments at cytosolic micronuclei arising from genome instability: its association with the endoplasmic reticulum membrane directs TREX1 to ruptured micronuclei, leading to micronuclear DNA degradation. Micronuclear DNA degradation is required to limit CGAS activation and subsequent inflammation. Unless degraded, these DNA fragments accumulate in the cytosol and activate the cGAS-STING innate immune signaling, leading to the production of type I interferon. Prevents chronic ATM-dependent checkpoint activation, by processing ssDNA polynucleotide species arising from the processing of aberrant DNA replication intermediates. Inefficiently degrades oxidized DNA, such as that generated upon antimicrobial reactive oxygen production or upon absorption of UV light. During GZMA-mediated cell death, contributes to DNA damage in concert with NME1. NME1 nicks one strand of DNA and TREX1 removes bases from the free 3' end to enhance DNA damage and prevent DNA end reannealing and rapid repair. The sequence is that of Three-prime repair exonuclease 1 from Bos taurus (Bovine).